Here is a 139-residue protein sequence, read N- to C-terminus: Putative pre-16S rRNA nuclease (139 aa).

It belongs to the YqgF nuclease family.

The protein resides in the cytoplasm. Could be a nuclease involved in processing of the 5'-end of pre-16S rRNA. In Streptococcus mutans serotype c (strain ATCC 700610 / UA159), this protein is Putative pre-16S rRNA nuclease.